The following is a 179-amino-acid chain: Putative ankyrin repeat protein RF_0922 (179 aa).

ANK repeat units lie at residues 5–34 (KGCT…EQAI), 40–72 (NGST…INHV), 75–104 (NGNT…SQAI), 110–139 (NGDT…EQAI), and 145–174 (NGNT…KQAI).

The protein is Putative ankyrin repeat protein RF_0922 of Rickettsia felis (strain ATCC VR-1525 / URRWXCal2) (Rickettsia azadi).